Consider the following 1178-residue polypeptide: DNA-directed RNA polymerase subunit beta' (1178 aa).

Positions 60, 62, 75, and 78 each coordinate Zn(2+). Residues Asp-450, Asp-452, and Asp-454 each contribute to the Mg(2+) site. Zn(2+)-binding residues include Cys-795, Cys-869, Cys-876, and Cys-879.

It belongs to the RNA polymerase beta' chain family. As to quaternary structure, the RNAP catalytic core consists of 2 alpha, 1 beta, 1 beta' and 1 omega subunit. When a sigma factor is associated with the core the holoenzyme is formed, which can initiate transcription. The cofactor is Mg(2+). Zn(2+) serves as cofactor.

The enzyme catalyses RNA(n) + a ribonucleoside 5'-triphosphate = RNA(n+1) + diphosphate. Its function is as follows. DNA-dependent RNA polymerase catalyzes the transcription of DNA into RNA using the four ribonucleoside triphosphates as substrates. The protein is DNA-directed RNA polymerase subunit beta' of Clostridium perfringens (strain ATCC 13124 / DSM 756 / JCM 1290 / NCIMB 6125 / NCTC 8237 / Type A).